The primary structure comprises 32 residues: Small ribosomal subunit protein uS19 (32 aa).

It belongs to the universal ribosomal protein uS19 family.

Functionally, protein S19 forms a complex with S13 that binds strongly to the 16S ribosomal RNA. This chain is Small ribosomal subunit protein uS19 (rpsS), found in Yersinia enterocolitica.